Here is a 192-residue protein sequence, read N- to C-terminus: Peptide deformylase (192 aa).

Fe cation-binding residues include C108 and H150. The active site involves E151. Fe cation is bound at residue H154.

This sequence belongs to the polypeptide deformylase family. Fe(2+) serves as cofactor.

The catalysed reaction is N-terminal N-formyl-L-methionyl-[peptide] + H2O = N-terminal L-methionyl-[peptide] + formate. Its function is as follows. Removes the formyl group from the N-terminal Met of newly synthesized proteins. Requires at least a dipeptide for an efficient rate of reaction. N-terminal L-methionine is a prerequisite for activity but the enzyme has broad specificity at other positions. The sequence is that of Peptide deformylase from Opitutus terrae (strain DSM 11246 / JCM 15787 / PB90-1).